We begin with the raw amino-acid sequence, 301 residues long: Cell division protein kinase 2 homolog CRK1 (301 aa).

The region spanning 5 to 297 (YERQEKIGEG…AADALNHPYF (293 aa)) is the Protein kinase domain. Residues 11-19 (IGEGTYGVV) and lysine 34 contribute to the ATP site. Residue aspartate 127 is the Proton acceptor of the active site. Residue threonine 160 is modified to Phosphothreonine; by CAK.

This sequence belongs to the protein kinase superfamily. CMGC Ser/Thr protein kinase family. CDC2/CDKX subfamily. Forms a stable but non-covalent complex with a regulatory subunit and with a cyclin.

It carries out the reaction [DNA-directed RNA polymerase] + ATP = phospho-[DNA-directed RNA polymerase] + ADP + H(+). With respect to regulation, phosphorylation at Thr-15 or Tyr-16 inactivates the enzyme, while phosphorylation at Thr-160 activates it. Its function is as follows. May be involved in some stage-specific role in the promastigote cell cycle. This Leishmania mexicana protein is Cell division protein kinase 2 homolog CRK1 (CRK1).